Consider the following 149-residue polypeptide: Calmodulin-1 (149 aa).

Alanine 2 carries the post-translational modification N-acetylalanine. EF-hand domains follow at residues glutamate 8 to asparagine 43, proline 44 to aspartate 79, aspartate 81 to lysine 116, and leucine 117 to lysine 149. Aspartate 21 is a binding site for Ca(2+). An N6-acetyllysine; alternate modification is found at lysine 22. A Glycyl lysine isopeptide (Lys-Gly) (interchain with G-Cter in SUMO2); alternate cross-link involves residue lysine 22. A Glycyl lysine isopeptide (Lys-Gly) (interchain with G-Cter in ubiquitin); alternate cross-link involves residue lysine 22. Ca(2+)-binding residues include aspartate 23, aspartate 25, threonine 27, and glutamate 32. Phosphothreonine; by CaMK4 is present on threonine 45. Positions 57, 59, 61, 63, and 68 each coordinate Ca(2+). Positions methionine 77 to lysine 149 are necessary and sufficient for interaction with PCP4. A Phosphoserine modification is found at serine 82. Aspartate 94 is a Ca(2+) binding site. Lysine 95 is subject to N6-acetyllysine. Ca(2+) is bound by residues aspartate 96, asparagine 98, and tyrosine 100. Residue tyrosine 100 is modified to Phosphotyrosine. Phosphoserine is present on serine 102. A Ca(2+)-binding site is contributed by glutamate 105. Threonine 111 is modified (phosphothreonine). At lysine 116 the chain carries N6,N6,N6-trimethyllysine; alternate. Lysine 116 carries the post-translational modification N6-methyllysine; alternate. Aspartate 130, aspartate 132, aspartate 134, and glutamine 136 together coordinate Ca(2+). Tyrosine 139 bears the Phosphotyrosine mark. Residue glutamate 141 coordinates Ca(2+).

It belongs to the calmodulin family. In terms of assembly, homotetramer. Interacts with MYO1C, MYO5A and RRAD. Interacts with MYO10. Interacts with CEP97, CCP110, TTN/titin and SRY. Interacts with USP6; the interaction is calcium dependent. Interacts with CDK5RAP2. Interacts with SCN5A. Interacts with RYR1. Interacts with FCHO1. Interacts with MIP in a 1:2 stoichiometry; the interaction with the cytoplasmic domains from two MIP subunits promotes MIP water channel closure. Interacts with ORAI1; this may play a role in the regulation of ORAI1-mediated calcium transport. Interacts with IQCF1. Interacts with SYT7. Interacts with CEACAM1 (via cytoplasmic domain); this interaction is in a calcium dependent manner and reduces homophilic cell adhesion through dissociation of dimer. Interacts with RYR2; regulates RYR2 calcium-release channel activity. Interacts with PCP4; regulates calmodulin calcium-binding. Interacts with the heterotetrameric KCNQ2 and KCNQ3 channel; the interaction is calcium-independent, constitutive and participates in the proper assembly of a functional heterotetrameric M channel. Interacts with alpha-synuclein/SNCA. Interacts with SLC9A1 in a calcium-dependent manner. In the absence of Ca(+2), interacts with GIMAP4 (via IQ domain). Interacts with SCN8A; the interaction modulates the inactivation rate of SCN8A. Interaction with KIF1A; the interaction is increased in presence of calcium and increases neuronal dense core vesicles motility. Interacts with KCNN3. Interacts with KCNQ1 (via C-terminus); forms a heterooctameric structure (with 4:4 KCNQ1:CALM stoichiometry) in a calcium-independent manner. Interacts with PIK3C3; the interaction modulates PIK3C3 kinase activity. Interacts with HINT1; interaction increases in the presence of calcium ions. Interacts with HINT3. Interacts with GARIN2; in mature sperm flagella. Interacts with IQUB. Interacts with SLC26A5 (via STAS domain); this interaction is calcium-dependent and the STAS domain interacts with only one lobe of CALM which is an elongated conformation. Ca(2+)-bound CALM1 binds CNGA1:CNGB1 channel (via CaM1 and CaM2 regions); this interaction modulates the affinity of the channel for cNMPs in response to intracellular Ca(2+) levels. Interacts with ITPR1; this interaction inhibits inositol 1,4,5 trisphosphate binding in both the presence and absence of calcium and 1,4,5 trisphosphate-induced calcium release in the presence of calcium. Component of the SIFI complex. Interacts with KCNN4; this interaction allows channel opening. Interacts with KCNN2; this interaction regulates the channel activity through calcium-binding. (Microbial infection) Interacts with Rubella virus protease/methyltransferase p150. As to quaternary structure, (Microbial infection) Interacts with Legionella pneumophila glutamylase SidJ. In terms of assembly, (Microbial infection) Interacts with C.violaceum CopC. C.violaceum CopC interacts specifically with the apo form of calmodulin. (Microbial infection) Interacts with S.flexneri OspC1 and OspC3. S.flexneri OspC1 and OspC3 interact specifically with the apo form of calmodulin and prevents calcium-binding. Ubiquitination results in a strongly decreased activity. In terms of processing, phosphorylation results in a decreased activity.

Its subcellular location is the cytoplasm. It localises to the cytoskeleton. The protein localises to the spindle. It is found in the spindle pole. The protein resides in the microtubule organizing center. Its subcellular location is the centrosome. It localises to the cell projection. The protein localises to the cilium. It is found in the flagellum. With respect to regulation, (Microbial infection) Inactivated by S.flexneri OspC1 and OspC3 proteins, which specifically bind the apo-form of calmodulin, thereby preventing calcium-binding and activity. In terms of biological role, calmodulin acts as part of a calcium signal transduction pathway by mediating the control of a large number of enzymes, ion channels, aquaporins and other proteins through calcium-binding. Calcium-binding is required for the activation of calmodulin. Among the enzymes to be stimulated by the calmodulin-calcium complex are a number of protein kinases, such as myosin light-chain kinases and calmodulin-dependent protein kinase type II (CaMK2), and phosphatases. Together with CCP110 and centrin, is involved in a genetic pathway that regulates the centrosome cycle and progression through cytokinesis. Is a regulator of voltage-dependent L-type calcium channels. Mediates calcium-dependent inactivation of CACNA1C. Positively regulates calcium-activated potassium channel activity of KCNN2. Forms a potassium channel complex with KCNQ1 and regulates electrophysiological activity of the channel via calcium-binding. Acts as a sensor to modulate the endoplasmic reticulum contacts with other organelles mediated by VMP1:ATP2A2. Its function is as follows. (Microbial infection) Required for Legionella pneumophila SidJ glutamylase activity. (Microbial infection) Required for C.violaceum CopC and S.flexneri OspC3 arginine ADP-riboxanase activity. In Homo sapiens (Human), this protein is Calmodulin-1.